Consider the following 92-residue polypeptide: MTATFDKVADIIAETSEIDRATITPESHTIDDLGIDSLDFLDIVFAIDKEFGIKIPLEKWTQEVNEGKVSTEEYFVLKNLCAKIDELKAAKA.

Positions 2–88 (TATFDKVADI…NLCAKIDELK (87 aa)) constitute a Carrier domain. S37 carries the post-translational modification O-(pantetheine 4'-phosphoryl)serine.

Post-translationally, 4'-phosphopantetheine is transferred from CoA to a specific serine of apo-ACP by AcpS. This modification is essential for activity because fatty acids are bound in thioester linkage to the sulfhydryl of the prosthetic group.

The protein resides in the cytoplasm. It functions in the pathway glycolipid biosynthesis; KDO(2)-lipid A biosynthesis. Carrier of the growing fatty acid chain in fatty acid biosynthesis. Is involved in the transfer of long hydroxylated fatty acids to lipid A. Is acylated predominantly with 27-hydroxyoctacosanoic acid. This chain is Acyl carrier protein AcpXL (acpXL), found in Rhizobium etli (strain ATCC 51251 / DSM 11541 / JCM 21823 / NBRC 15573 / CFN 42).